The primary structure comprises 549 residues: Probable protein kinase UbiB (549 aa).

Positions 123–501 (NFDDTPLASA…QQKAHKSNYL (379 aa)) constitute a Protein kinase domain. ATP is bound by residues 129-137 (LASASISQV) and K152. Catalysis depends on D287, which acts as the Proton acceptor. 2 consecutive transmembrane segments (helical) span residues 498-518 (SNYL…LFSQ) and 520-540 (ATLW…LLGW).

This sequence belongs to the ABC1 family. UbiB subfamily.

Its subcellular location is the cell inner membrane. The protein operates within cofactor biosynthesis; ubiquinone biosynthesis [regulation]. Its function is as follows. Is probably a protein kinase regulator of UbiI activity which is involved in aerobic coenzyme Q (ubiquinone) biosynthesis. This Shewanella loihica (strain ATCC BAA-1088 / PV-4) protein is Probable protein kinase UbiB.